A 976-amino-acid chain; its full sequence is Leucine--tRNA ligase (976 aa).

Positions 1–23 (MTESPTTTPGSTSGAPSGVPSGV) are enriched in low complexity. The segment at 1–34 (MTESPTTTPGSTSGAPSGVPSGVNDAESDAPRHR) is disordered. Positions 86–97 (PYPSGEGLHVGH) match the 'HIGH' region motif. The 'KMSKS' region motif lies at 745-749 (KIGKS). Residue Lys748 coordinates ATP.

The protein belongs to the class-I aminoacyl-tRNA synthetase family.

The protein resides in the cytoplasm. The catalysed reaction is tRNA(Leu) + L-leucine + ATP = L-leucyl-tRNA(Leu) + AMP + diphosphate. The chain is Leucine--tRNA ligase from Mycobacterium ulcerans (strain Agy99).